A 115-amino-acid polypeptide reads, in one-letter code: Large ribosomal subunit protein bL20c (115 aa).

The protein belongs to the bacterial ribosomal protein bL20 family.

It localises to the plastid. The protein resides in the organellar chromatophore. Its function is as follows. Binds directly to 23S ribosomal RNA and is necessary for the in vitro assembly process of the 50S ribosomal subunit. It is not involved in the protein synthesizing functions of that subunit. This Paulinella chromatophora protein is Large ribosomal subunit protein bL20c.